A 444-amino-acid polypeptide reads, in one-letter code: Adenylosuccinate synthetase (444 aa).

Residues 19-25 (GDEGKGK) and 47-49 (GHT) contribute to the GTP site. Aspartate 20 acts as the Proton acceptor in catalysis. Mg(2+) is bound by residues aspartate 20 and glycine 47. Residues 20 to 23 (DEGK), 45 to 48 (NAGH), threonine 139, arginine 153, glutamine 234, threonine 249, and arginine 317 contribute to the IMP site. Histidine 48 serves as the catalytic Proton donor. A substrate-binding site is contributed by 313–319 (TVTGRPR). GTP is bound by residues arginine 319, 345–347 (KLD), and 427–429 (STG).

This sequence belongs to the adenylosuccinate synthetase family. Homodimer. Mg(2+) serves as cofactor.

Its subcellular location is the cytoplasm. The enzyme catalyses IMP + L-aspartate + GTP = N(6)-(1,2-dicarboxyethyl)-AMP + GDP + phosphate + 2 H(+). The protein operates within purine metabolism; AMP biosynthesis via de novo pathway; AMP from IMP: step 1/2. Its function is as follows. Plays an important role in the de novo pathway of purine nucleotide biosynthesis. Catalyzes the first committed step in the biosynthesis of AMP from IMP. In Methylibium petroleiphilum (strain ATCC BAA-1232 / LMG 22953 / PM1), this protein is Adenylosuccinate synthetase.